The chain runs to 949 residues: General transcription factor II-I repeat domain-containing protein 2B (949 aa).

GTF2I-like repeat units lie at residues 98–192 (QVHS…QLGG) and 323–417 (LSSI…SNVG).

Belongs to the TFII-I family. In terms of tissue distribution, ubiquitous.

Its subcellular location is the nucleus. The protein is General transcription factor II-I repeat domain-containing protein 2B (GTF2IRD2B) of Homo sapiens (Human).